A 187-amino-acid polypeptide reads, in one-letter code: Peptidyl-tRNA hydrolase (187 aa).

Tyrosine 15 serves as a coordination point for tRNA. Histidine 20 serves as the catalytic Proton acceptor. TRNA-binding residues include phenylalanine 64, asparagine 66, and asparagine 112.

It belongs to the PTH family. In terms of assembly, monomer.

The protein localises to the cytoplasm. It catalyses the reaction an N-acyl-L-alpha-aminoacyl-tRNA + H2O = an N-acyl-L-amino acid + a tRNA + H(+). Its function is as follows. Hydrolyzes ribosome-free peptidyl-tRNAs (with 1 or more amino acids incorporated), which drop off the ribosome during protein synthesis, or as a result of ribosome stalling. Functionally, catalyzes the release of premature peptidyl moieties from peptidyl-tRNA molecules trapped in stalled 50S ribosomal subunits, and thus maintains levels of free tRNAs and 50S ribosomes. The sequence is that of Peptidyl-tRNA hydrolase from Bacteroides fragilis (strain ATCC 25285 / DSM 2151 / CCUG 4856 / JCM 11019 / LMG 10263 / NCTC 9343 / Onslow / VPI 2553 / EN-2).